The primary structure comprises 214 residues: RNA pyrophosphohydrolase (214 aa).

Positions 6-149 constitute a Nudix hydrolase domain; it reads GFRPNVGIIL…KRDVYQLALT (144 aa). The Nudix box signature appears at 38–59; the sequence is GGIKYGETPMQAMYRELHEETG.

It belongs to the Nudix hydrolase family. RppH subfamily. It depends on a divalent metal cation as a cofactor.

Its function is as follows. Accelerates the degradation of transcripts by removing pyrophosphate from the 5'-end of triphosphorylated RNA, leading to a more labile monophosphorylated state that can stimulate subsequent ribonuclease cleavage. This is RNA pyrophosphohydrolase from Burkholderia orbicola (strain MC0-3).